The primary structure comprises 108 residues: uncharacterized protein (108 aa).

The span at Asn-48–Thr-73 shows a compositional bias: low complexity. The disordered stretch occupies residues Asn-48–Lys-81.

This is an uncharacterized protein from Dictyostelium discoideum (Social amoeba).